The following is a 195-amino-acid chain: MRVAEVTRNTSETQIRVSLNLDGSGRQKLASGVPFLDHMLDQIARHGMFDLEVEATGDTHIDDHHTVEDVGITLGQAVARAIGDKKGITRYGHSYVPLDECLSRVVIDFSGRPGLEFHVPFTRARVGSFDVDLTIEFFRGFVNHAGVTLHIDNLRGINAHHQCETVFKAFGRALRMAVELDPRAANTIPSTKGTL.

This sequence belongs to the imidazoleglycerol-phosphate dehydratase family.

The protein localises to the cytoplasm. It carries out the reaction D-erythro-1-(imidazol-4-yl)glycerol 3-phosphate = 3-(imidazol-4-yl)-2-oxopropyl phosphate + H2O. Its pathway is amino-acid biosynthesis; L-histidine biosynthesis; L-histidine from 5-phospho-alpha-D-ribose 1-diphosphate: step 6/9. The chain is Imidazoleglycerol-phosphate dehydratase from Cupriavidus taiwanensis (strain DSM 17343 / BCRC 17206 / CCUG 44338 / CIP 107171 / LMG 19424 / R1) (Ralstonia taiwanensis (strain LMG 19424)).